The following is a 475-amino-acid chain: Splicing factor U2AF 65 kDa subunit (475 aa).

The tract at residues 1 to 90 (MSDFDEFERQ…RHEKKKKVRK (90 aa)) is disordered. Position 2 is an N-acetylserine (Ser-2). Ser-2 carries the post-translational modification Phosphoserine. The tract at residues 2-93 (SDFDEFERQL…KKKKVRKYWD (92 aa)) is required for interaction with PRPF19. The segment covering 7–22 (FERQLNENKQERDKEN) has biased composition (basic and acidic residues). 5-hydroxylysine; by JMJD6; alternate is present on Lys-15. A Glycyl lysine isopeptide (Lys-Gly) (interchain with G-Cter in SUMO2); alternate cross-link involves residue Lys-15. A necessary and sufficient to stimulate pre-mRNAs 3'-end cleavage in a CFIm complex-dependent manner region spans residues 17–47 (ERDKENRHRKRSHSRSRSRDRKRRSRSRDRR). Over residues 23–46 (RHRKRSHSRSRSRDRKRRSRSRDR) the composition is skewed to basic residues. Positions 47–56 (RNRDQRSASR) are enriched in basic and acidic residues. A Glycyl lysine isopeptide (Lys-Gly) (interchain with G-Cter in SUMO2); alternate cross-link involves residue Lys-70. The residue at position 70 (Lys-70) is an N6-acetyllysine; alternate. Phosphoserine is present on Ser-79. Residues 79–89 (SPRHEKKKKVR) show a composition bias toward basic residues. 3 RRM domains span residues 149–231 (RRLY…RPHD), 259–337 (HKLF…RASV), and 385–466 (LPEE…YCDP). The residue at position 276 (Lys-276) is a 5-hydroxylysine; by JMJD6. The residue at position 294 (Ser-294) is a Phosphoserine.

This sequence belongs to the splicing factor SR family. As to quaternary structure, interacts with U2AF1L4. Heterodimer with U2AF1. Binds unphosphorylated SF1. Interacts with SCAF11 and SNW1. Interacts with ZRSR2/U2AF1-RS2. Interacts with RBM17. Interacts with PRPF19; the interaction is direct. Interacts with POLR2A (via the C-terminal domain); recruits PRPF19 and the Prp19 complex to the pre-mRNA. Interacts with KHDC4 (Isoform 2). Interacts with ZRSR2. Interacts with the SF3B complex composed of SF3B1, SF3B2, SF3B3, SF3B4, SF3B5, SF3B6 and PHF5A. Interacts (via N-terminus) with CPSF7 (via C-terminus); this interaction stimulates pre-mRNA 3'-end processing by promoting the recruitment of the CFIm complex to cleavage and polyadenylation signals. Interacts with ARGLU1; interaction may be involved in ARGLU1-mediated modulation of alternative splicing. In terms of processing, lysyl-hydroxylation at Lys-15 and Lys-276 affects the mRNA splicing activity of the protein, leading to regulate some, but not all, alternative splicing events.

The protein resides in the nucleus. Its function is as follows. Plays a role in pre-mRNA splicing and 3'-end processing. By recruiting PRPF19 and the PRP19C/Prp19 complex/NTC/Nineteen complex to the RNA polymerase II C-terminal domain (CTD), and thereby pre-mRNA, may couple transcription to splicing. Induces cardiac troponin-T (TNNT2) pre-mRNA exon inclusion in muscle. Regulates the TNNT2 exon 5 inclusion through competition with MBNL1. Binds preferentially to a single-stranded structure within the polypyrimidine tract of TNNT2 intron 4 during spliceosome assembly. Required for the export of mRNA out of the nucleus, even if the mRNA is encoded by an intron-less gene. Represses the splicing of MAPT/Tau exon 10. Positively regulates pre-mRNA 3'-end processing by recruiting the CFIm complex to cleavage and polyadenylation signals. This chain is Splicing factor U2AF 65 kDa subunit (U2AF2), found in Homo sapiens (Human).